The chain runs to 304 residues: Putative ankyrin repeat protein R598 (304 aa).

ANK repeat units follow at residues 7 to 36 (NIVT…SINL), 77 to 107 (YIST…PVDF), 122 to 151 (GSNH…DVNA), 152 to 181 (HNYL…NVLR), 183 to 209 (ANGN…EIDM), 210 to 239 (NLSR…DINK), and 265 to 293 (FDFT…NVDI).

This Acanthamoeba polyphaga (Amoeba) protein is Putative ankyrin repeat protein R598.